Consider the following 195-residue polypeptide: uncharacterized protein (195 aa).

Residues 6 to 66 (VESRKRLLKA…ELITDFHSRV (61 aa)) enclose the HTH tetR-type domain. The segment at residues 29-48 (KVSEIVKKAGFTQPSFYLYF) is a DNA-binding region (H-T-H motif).

This is an uncharacterized protein from Bacillus subtilis (strain 168).